The following is a 282-amino-acid chain: Phosphoglucan phosphatase LSF2, chloroplastic (282 aa).

Residues 1 to 61 constitute a chloroplast transit peptide; the sequence is MSVIGSKSCI…GENPGTNGVS (61 aa). Residues Tyr-83, 153–156, Asp-161, and 177–180 contribute to the substrate site; these read RHMR and SLEW. Residues 92–249 enclose the Tyrosine-protein phosphatase domain; it reads NYTLIRDELI…TYDLAKNDPW (158 aa). Catalysis depends on Cys-193, which acts as the Phosphocysteine intermediate. The Glucan phosphatase signature motif CXAGXGR motif lies at 193 to 199; that stretch reads CSAGLGR. Residues 194–199, Gly-230, Lys-245, Glu-251, 259–263, and Glu-268 each bind substrate; these read SAGLGR and NAFED.

As to expression, widely expressed.

The protein localises to the plastid. Its subcellular location is the chloroplast. Functionally, starch-associated phosphoglucan phosphatase that selectively dephosphorylates the glucan C3 position. Probably participates in the regulation of starch degradation. The chain is Phosphoglucan phosphatase LSF2, chloroplastic (LSF2) from Arabidopsis thaliana (Mouse-ear cress).